A 695-amino-acid polypeptide reads, in one-letter code: A-kinase anchor protein 17A (695 aa).

The tract at residues 83-112 (VENKSLVKSFLACLDGKTIKLSGFSDILKV) is PKA-RI and PKA-RII subunit binding domain. A Glycyl lysine isopeptide (Lys-Gly) (interchain with G-Cter in SUMO1); alternate cross-link involves residue lysine 118. Lysine 118 participates in a covalent cross-link: Glycyl lysine isopeptide (Lys-Gly) (interchain with G-Cter in SUMO2); alternate. Residues 147-256 (DTIHLEGLPC…KAVACNIKVS (110 aa)) form the RRM domain. The tract at residues 279–337 (QELEQQREEQKRREKEAEERQRAEERKQKELEELERERKREEKLRKREQKQRDRELRRN) is disordered. The tract at residues 425-454 (LGLQRKERELRERLLSILLSKKPDDSHTHD) is PKA-RI-alpha subunit binding domain. The segment at 482–695 (TTLHPLGGQP…PSRHRSTWNR (214 aa)) is disordered. The residue at position 537 (serine 537) is a Phosphoserine. A compositionally biased stretch (basic and acidic residues) spans 567–585 (VSRKDTRSEQDKCNREPSK). 2 stretches are compositionally biased toward basic residues: residues 598 to 609 (RHKRERSRARRA) and 618 to 628 (RKERRPHKKHA). Basic and acidic residues predominate over residues 629 to 644 (YKDDSPRRRSTSPDHT). Phosphoserine is present on serine 633. Composition is skewed to basic residues over residues 645 to 658 (RSRR…HRRE) and 666 to 695 (SASR…TWNR).

As to quaternary structure, monomer. Component of the spliceosome. Interacts with ZRANB2 and SFRS1/ASF through its Arg/Ser-rich domain. Interacts with RI and RII subunits of PKA. Widely expressed. Found in heart, brain, lung, liver, skeletal muscle, kidney and pancreas. Expressed in activated B-cells and placenta. Expressed in all cell lines tested including Jurkat-TAg, U-937 and HEK293 cells.

Its subcellular location is the nucleus speckle. Splice factor regulating alternative splice site selection for certain mRNA precursors. Mediates regulation of pre-mRNA splicing in a PKA-dependent manner. The chain is A-kinase anchor protein 17A (AKAP17A) from Homo sapiens (Human).